A 604-amino-acid chain; its full sequence is NADP-dependent malic enzyme, mitochondrial (604 aa).

A disordered region spans residues 28–50 (SAPAQGCHSKSGPPRPVPLKKRG). Tyr-137 functions as the Proton donor in the catalytic mechanism. Arg-190 contacts NADP(+). The active-site Proton acceptor is Lys-208. A divalent metal cation-binding residues include Glu-280, Asp-281, and Asp-304. Asp-304 contributes to the NADP(+) binding site. The residue at position 371 (Ser-371) is a Phosphoserine. Asn-443 provides a ligand contact to NADP(+).

The protein belongs to the malic enzymes family. It depends on Mg(2+) as a cofactor. The cofactor is Mn(2+).

Its subcellular location is the mitochondrion matrix. The enzyme catalyses (S)-malate + NADP(+) = pyruvate + CO2 + NADPH. It carries out the reaction oxaloacetate + H(+) = pyruvate + CO2. This Mus musculus (Mouse) protein is NADP-dependent malic enzyme, mitochondrial (Me3).